The sequence spans 1015 residues: DExH-box ATP-dependent RNA helicase DExH8 (1015 aa).

The Helicase ATP-binding domain maps to 36–197 (IDKILENRVT…FKELGRGERV (162 aa)). 49 to 56 (GEPGCGKS) contributes to the ATP binding site. Positions 144–147 (DEVH) match the DEVH box motif. The region spanning 254–419 (LIHDLILYIH…KLSLRQQVLH (166 aa)) is the Helicase C-terminal domain. C3H1-type zinc fingers lie at residues 727 to 753 (YGEA…THTL) and 754 to 782 (QSTR…HAMR).

This sequence belongs to the DExH box helicase family.

The enzyme catalyses ATP + H2O = ADP + phosphate + H(+). The protein is DExH-box ATP-dependent RNA helicase DExH8 of Arabidopsis thaliana (Mouse-ear cress).